The chain runs to 543 residues: CTP synthase (543 aa).

An amidoligase domain region spans residues 1-267 (MKQTKYIFVT…LSPIAEILDL (267 aa)). A CTP-binding site is contributed by serine 15. UTP is bound at residue serine 15. Residues 16–21 (SLGKGI) and aspartate 73 each bind ATP. Mg(2+) contacts are provided by aspartate 73 and glutamate 141. Residues 148–150 (DIE), 188–193 (KTKPTQ), and lysine 224 each bind CTP. UTP contacts are provided by residues 188 to 193 (KTKPTQ) and lysine 224. Positions 292–543 (KIAFVGKYVD…IKAAINYEDN (252 aa)) constitute a Glutamine amidotransferase type-1 domain. Residue glycine 354 participates in L-glutamine binding. The Nucleophile; for glutamine hydrolysis role is filled by cysteine 381. Residues 382–385 (LGMQ), glutamate 405, and arginine 473 each bind L-glutamine. Residues histidine 516 and glutamate 518 contribute to the active site.

The protein belongs to the CTP synthase family. As to quaternary structure, homotetramer.

The catalysed reaction is UTP + L-glutamine + ATP + H2O = CTP + L-glutamate + ADP + phosphate + 2 H(+). It carries out the reaction L-glutamine + H2O = L-glutamate + NH4(+). The enzyme catalyses UTP + NH4(+) + ATP = CTP + ADP + phosphate + 2 H(+). The protein operates within pyrimidine metabolism; CTP biosynthesis via de novo pathway; CTP from UDP: step 2/2. With respect to regulation, allosterically activated by GTP, when glutamine is the substrate; GTP has no effect on the reaction when ammonia is the substrate. The allosteric effector GTP functions by stabilizing the protein conformation that binds the tetrahedral intermediate(s) formed during glutamine hydrolysis. Inhibited by the product CTP, via allosteric rather than competitive inhibition. Functionally, catalyzes the ATP-dependent amination of UTP to CTP with either L-glutamine or ammonia as the source of nitrogen. Regulates intracellular CTP levels through interactions with the four ribonucleotide triphosphates. The sequence is that of CTP synthase from Campylobacter jejuni subsp. jejuni serotype O:6 (strain 81116 / NCTC 11828).